Reading from the N-terminus, the 232-residue chain is UPF0502 protein Aave_3438 (232 aa).

The protein belongs to the UPF0502 family.

In Paracidovorax citrulli (strain AAC00-1) (Acidovorax citrulli), this protein is UPF0502 protein Aave_3438.